Reading from the N-terminus, the 200-residue chain is Adenylate kinase (200 aa).

Gly10–Thr15 provides a ligand contact to ATP. Residues Ser30–Val59 form an NMP region. AMP is bound by residues Thr31, Arg36, Gly57–Val59, Gly85–Arg88, and Gln92. The tract at residues Lys126–Asp142 is LID. Position 127 (Arg127) interacts with ATP. AMP contacts are provided by Arg139 and Arg150. Lys178 provides a ligand contact to ATP.

It belongs to the adenylate kinase family. As to quaternary structure, monomer.

It localises to the cytoplasm. It catalyses the reaction AMP + ATP = 2 ADP. Its pathway is purine metabolism; AMP biosynthesis via salvage pathway; AMP from ADP: step 1/1. Catalyzes the reversible transfer of the terminal phosphate group between ATP and AMP. Plays an important role in cellular energy homeostasis and in adenine nucleotide metabolism. The chain is Adenylate kinase from Methylorubrum extorquens (strain PA1) (Methylobacterium extorquens).